The sequence spans 362 residues: Apelin receptor A (362 aa).

Residues 1–37 (METEGLSPMLYEDDYYYGNETGLQPCDETDWDFSYSL) are Extracellular-facing. N-linked (GlcNAc...) asparagine glycosylation is present at N19. 2 disulfides stabilise this stretch: C26-C286 and C108-C185. A helical transmembrane segment spans residues 38–58 (LPVFYMIVFVLGLSGNGVVIF). Residues 59 to 76 (TVWKSKPKRRSADTYIGN) lie on the Cytoplasmic side of the membrane. Residues 77–97 (LALADLAFVVTLPLWATYTAL) traverse the membrane as a helical segment. Over 98 to 110 (GFHWPFGSALCKL) the chain is Extracellular. Residues 111–131 (SSYLVLLNMFASVFCLTCLSF) form a helical membrane-spanning segment. At 132–151 (DRYLAIVHSLSSAKLRSRSS) the chain is on the cytoplasmic side. Residues 152 to 172 (IIVSLAVIWLFSGLLALPSLI) form a helical membrane-spanning segment. Topologically, residues 173–199 (LRDTRVEGNNTICDLDFSGVSSKENEN) are extracellular. N-linked (GlcNAc...) asparagine glycosylation is present at N181. Residues 200 to 220 (FWIGGLSILTTVPGFLLPLLL) form a helical membrane-spanning segment. Over 221-248 (MTIFYCFIGGKVTMHFQNLKKEEQKKKR) the chain is Cytoplasmic. A helical transmembrane segment spans residues 249–269 (LLKIIITLVVVFAICWLPFHI). Topologically, residues 270–296 (LKTIHFLDLMGFLELSCSTQNIIVSLH) are extracellular. The helical transmembrane segment at 297–317 (PYATCLAYVNSCLNPFLYAFF) threads the bilayer. Over 318-362 (DLRFRSQCFFFFGFKKVLQGHLSNTSSSLSAQTQKSEIHSLATKV) the chain is Cytoplasmic.

This sequence belongs to the G-protein coupled receptor 1 family. In terms of tissue distribution, expressed in all blood vessels including the posterior cardinal vein, intersomitic veins and the vitelline vein network. At the gastrula stage, exclusively expressed in the mesodermal layer and at the neurula stage in the lateral plate mesoderm. Larval expression is observed in the endothelium of the primary blood vessels and the forming heart.

Its subcellular location is the cell membrane. In terms of biological role, g protein-coupled receptor for peptide hormones apelin (apln) and apelin receptor early endogenous ligand (apela), that plays a role in the regulation of normal cardiovascular function and fluid homeostasis. When acting as apelin receptor, activates both G(i) protein pathway that inhibits adenylate cyclase activity, and the beta-arrestin pathway that promotes internalization of the receptor. Also functions as mechanoreceptor that is activated by pathological stimuli in a G-protein-independent fashion to induce beta-arrestin signaling, hence eliciting cardiac hypertrophy. However, the presence of apelin ligand blunts cardiac hypertrophic induction from APLNR/APJ on response to pathological stimuli. Plays a key role in early development such as gastrulation, blood vessels formation and heart morphogenesis by acting as a receptor for apela hormone, promoting endoderm and mesendoderm cell migration and regulating the migration of cells fated to become myocardial progenitors, respectively. Promotes angioblast migration toward the embryonic midline, i.e. the position of the future vessel formation, during vasculogenesis. May promote sinus venosus (SV)-derived endothelial cells migration into the developing heart to promote coronary blood vessel development. Required for cardiovascular development, particularly for intersomitic vein angiogenesis by acting as a receptor for apln hormone. Also plays a role in various processes in adults such as regulation of blood vessel formation, blood pressure, heart contractility, and heart failure. Acts upstream of the i/o type of G-alpha proteins in the differentiation of endothelium, erythroid cells, myeloid cells and cardiomyocytes. In Xenopus laevis (African clawed frog), this protein is Apelin receptor A (aplnr-a).